The chain runs to 542 residues: La-related protein 7 homolog (542 aa).

One can recognise an HTH La-type RNA-binding domain in the interval V112–Q239. In terms of domain architecture, RRM spans R247 to K335. Residues E374–K542 enclose the xRRM domain.

Belongs to the LARP7 family. In terms of assembly, component of the telomerase holoenzyme complex, composed of the catalytic core (the catalytic subunit TERT, the telomerase RNA template component TER and TAP65/p65), which is associated with two heterotrimeric subcomplexes: (i) the replication protein A (RPA)-related subcomplex, composed of TEB1, RPA2/TEB2 and RPA3/TEB3 and (ii) the CST-like subcomplex, composed of TAP75/p75, TAP45/p45 and TAP19/p19. TEB1 and the CST-like subcomplex are tethered to the catalytic core by TAP50/p50.

The protein localises to the chromosome. It is found in the telomere. Functionally, RNA-binding protein required for assembly of the holoenzyme telomerase ribonucleoprotein (RNP) complex. Telomerase is an essential ribonucleoprotein enzyme that copies new telomeric repeats onto chromosome ends by repetitively synthesizing the short telomere-repeat sequence 5'-TTGGGG-3' using an RNA template component TER. TAP65/p65 specifically binds telomerase RNA template TER and is required for biogenesis and placement of the TER stem-terminus element: TAP65/p65 first protects the 3'-end of TER from degradation and acts as a chaperone to correctly fold TER for protein binding; it then bends TER stem-loop IV to position it for interaction of stem-loop IV with catalytic TERT RNA-binding domain. The polypeptide is La-related protein 7 homolog (Tetrahymena thermophila (strain SB210)).